We begin with the raw amino-acid sequence, 230 residues long: DNA repair protein rdl1 (230 aa).

In terms of assembly, interacts with rlp1 and sws1.

The protein localises to the cytoplasm. It localises to the nucleus. Involved in homologous recombination where it functions at an early stage of recombination in a pre-recombinogenic complex with rlp1 and sws1. Also has a role at a later stage of recombination in association with the rhp55-rhp57 complex. The chain is DNA repair protein rdl1 (rdl1) from Schizosaccharomyces pombe (strain 972 / ATCC 24843) (Fission yeast).